The following is a 137-amino-acid chain: Large-conductance mechanosensitive channel (137 aa).

The next 2 helical transmembrane spans lie at 9–29 and 79–99; these read AFAV…GAAF and IQTI…VKAI.

Belongs to the MscL family. In terms of assembly, homopentamer.

It is found in the cell inner membrane. Channel that opens in response to stretch forces in the membrane lipid bilayer. May participate in the regulation of osmotic pressure changes within the cell. The polypeptide is Large-conductance mechanosensitive channel (Pseudomonas aeruginosa (strain UCBPP-PA14)).